The following is a 404-amino-acid chain: MTMSARVRKMALPSNCDLSDVEMICDNVLGCLEDLDSSRVVSRVTSREDVDESTIGDLISLDCVSLETPLFSFLFLGVTLFLFLSLLQQSLVFLLGVFLRLVQLVGHFLLLLMGEQIGVIDKAMSHIPLPEVGQHSQQVQIQHLVERRFGLDVVTAIVVIGDNELFQVVGHQFRVGIMSDGQRSQQSQNSGMNVASSSRGRHQLVPDRPGSQLSSQKLSSLVPLARIAAAEIPCAVQQSLSRLFARSVQNRQVQRPHLDPQRQRNIVGVFGVQHGRAVLLCALGGDLIEKRPNQLVRVVKVLVDKFPRRLPKRLVHLVHLGRGSLVHCRCDRVCQQRGCCHLWHCGGHFFVGLVSWIVDETAACVVFCLFKVVSETQRISSLPRYMHRELNTAGVVWGCGGKHM.

A run of 3 helical transmembrane segments spans residues 73–93 (FLFL…SLVF), 94–114 (LLGV…LLMG), and 149–169 (FGLD…FQVV). A disordered region spans residues 180-214 (DGQRSQQSQNSGMNVASSSRGRHQLVPDRPGSQLS). Residues 181–198 (GQRSQQSQNSGMNVASSS) show a composition bias toward polar residues. Residues 349-369 (FFVGLVSWIVDETAACVVFCL) form a helical membrane-spanning segment.

It localises to the peroxisome membrane. In terms of biological role, essential for the import of peroxisomal matrix proteins. The chain is Peroxisomal biogenesis factor 9 (PEX9) from Yarrowia lipolytica (strain CLIB 122 / E 150) (Yeast).